The following is a 339-amino-acid chain: MRVYYDRDADVNLIKSKKVAVIGYGSQGHAHVLNLRDSGVKDVAVALRPGSASIKKAEAEGLKVLTPAEAAAWADVVMILTPDELQADLYKSELAANLKPGAALVFAHGLAIHFKLIEARADLDVFMVAPKGPGHTVRGEYLKGGGVPCLVAVAQNPTGNALELALSYASAIGGGRSGIIETTFREECETDLFGEQVVLCGGLSKLIQYGFETLVEAGYAPEMAYFECLHEVKLIVDLIYEGGIANMRYSISNTAEYGDYVTGSRIITEATKAEMKRVLADIQSGRFVRDWMLECKAGQPSFKATRRIQXEHVIEVVGEKLRGMMPWISKNKLVDKARN.

The KARI N-terminal Rossmann domain occupies 1 to 182; sequence MRVYYDRDAD…GGGRSGIIET (182 aa). NADP(+) contacts are provided by residues 24 to 27, Arg-48, Ser-51, Ser-53, and 83 to 86; these read YGSQ and DELQ. His-108 is an active-site residue. Gly-134 serves as a coordination point for NADP(+). In terms of domain architecture, KARI C-terminal knotted spans 183-328; it reads TFREECETDL…EKLRGMMPWI (146 aa). Residues Asp-191, Glu-195, Glu-227, and Glu-231 each contribute to the Mg(2+) site. Ser-252 provides a ligand contact to substrate.

It belongs to the ketol-acid reductoisomerase family. The cofactor is Mg(2+).

It carries out the reaction (2R)-2,3-dihydroxy-3-methylbutanoate + NADP(+) = (2S)-2-acetolactate + NADPH + H(+). It catalyses the reaction (2R,3R)-2,3-dihydroxy-3-methylpentanoate + NADP(+) = (S)-2-ethyl-2-hydroxy-3-oxobutanoate + NADPH + H(+). Its pathway is amino-acid biosynthesis; L-isoleucine biosynthesis; L-isoleucine from 2-oxobutanoate: step 2/4. It functions in the pathway amino-acid biosynthesis; L-valine biosynthesis; L-valine from pyruvate: step 2/4. Its function is as follows. Involved in the biosynthesis of branched-chain amino acids (BCAA). Catalyzes an alkyl-migration followed by a ketol-acid reduction of (S)-2-acetolactate (S2AL) to yield (R)-2,3-dihydroxy-isovalerate. In the isomerase reaction, S2AL is rearranged via a Mg-dependent methyl migration to produce 3-hydroxy-3-methyl-2-ketobutyrate (HMKB). In the reductase reaction, this 2-ketoacid undergoes a metal-dependent reduction by NADPH to yield (R)-2,3-dihydroxy-isovalerate. This chain is Ketol-acid reductoisomerase (NADP(+)), found in Magnetospirillum molischianum (Rhodospirillum molischianum).